Reading from the N-terminus, the 150-residue chain is 3-hydroxyacyl-[acyl-carrier-protein] dehydratase FabZ (150 aa).

H54 is a catalytic residue.

The protein belongs to the thioester dehydratase family. FabZ subfamily.

Its subcellular location is the cytoplasm. The enzyme catalyses a (3R)-hydroxyacyl-[ACP] = a (2E)-enoyl-[ACP] + H2O. Functionally, involved in unsaturated fatty acids biosynthesis. Catalyzes the dehydration of short chain beta-hydroxyacyl-ACPs and long chain saturated and unsaturated beta-hydroxyacyl-ACPs. The protein is 3-hydroxyacyl-[acyl-carrier-protein] dehydratase FabZ of Psychromonas ingrahamii (strain DSM 17664 / CCUG 51855 / 37).